Consider the following 213-residue polypeptide: Histone H1.3 (213 aa).

Ser-1 is subject to N-acetylserine. The segment covering 1-15 (SEAPAETAAPAPAEK) has biased composition (low complexity). The disordered stretch occupies residues 1-41 (SEAPAETAAPAPAEKSPAKKKKAAKKPGAGAAKRKAAGPPV). Lys-15 carries the N6-acetyllysine modification. Residues Lys-35 and Lys-53 each carry the N6-(beta-hydroxybutyryl)lysine modification. An H15 domain is found at 37 to 110 (AGPPVSELIT…GASGSFKLDK (74 aa)). Residue Arg-55 is modified to Citrulline. Residues Lys-65, Lys-86, and Lys-91 each carry the N6-(beta-hydroxybutyryl)lysine modification. The segment at 92 to 213 (GTLVETKGTG…AKKTAAKKKK (122 aa)) is disordered. The residue at position 105 (Ser-105) is a Phosphoserine. Lys-107 carries the post-translational modification N6-(beta-hydroxybutyryl)lysine. The span at 107–119 (KLDKKAASGEAKP) shows a compositional bias: basic and acidic residues. 3 stretches are compositionally biased toward basic residues: residues 120–131 (KPKKAGAAKPKK), 138–170 (KKPKKAAGAKKAVKKTPKKAPKPKAAAKPKVAK), and 179–213 (KSPKKAKAVKPKAAKPKAPKPKAAKAKKTAAKKKK).

This sequence belongs to the histone H1/H5 family. Post-translationally, H1 histones are progressively phosphorylated during the cell cycle, becoming maximally phosphorylated during late G2 phase and M phase, and being dephosphorylated sharply thereafter. Citrullination at Arg-55 (H1R54ci) by PADI4 takes place within the DNA-binding site of H1 and results in its displacement from chromatin and global chromatin decondensation, thereby promoting pluripotency and stem cell maintenance.

It is found in the nucleus. The protein localises to the chromosome. Histones H1 are necessary for the condensation of nucleosome chains into higher-order structures. The polypeptide is Histone H1.3 (Oryctolagus cuniculus (Rabbit)).